The chain runs to 207 residues: Large ribosomal subunit protein bL25 (207 aa).

This sequence belongs to the bacterial ribosomal protein bL25 family. CTC subfamily. Part of the 50S ribosomal subunit; part of the 5S rRNA/L5/L18/L25 subcomplex. Contacts the 5S rRNA. Binds to the 5S rRNA independently of L5 and L18.

In terms of biological role, this is one of the proteins that binds to the 5S RNA in the ribosome where it forms part of the central protuberance. The chain is Large ribosomal subunit protein bL25 from Brucella canis (strain ATCC 23365 / NCTC 10854 / RM-666).